The following is a 963-amino-acid chain: MHC class II regulatory factor RFX1 (963 aa).

Disordered regions lie at residues 1–88 (MATQ…APSP), 105–126 (ASET…VPTQ), 174–218 (QSPA…GTPA), and 361–392 (SSSE…GSSG). The span at 20-41 (PQAPPQALPQPPPPAAPQPPAA) shows a compositional bias: pro residues. Low complexity predominate over residues 42–67 (ATPQPQYVTELQSPQPQTQPPGSQKQ). Ser54 carries the phosphoserine modification. Over residues 75-87 (APAPSQPATPAPS) the composition is skewed to pro residues. Polar residues-rich tracts occupy residues 107 to 119 (ETVS…STAS), 181 to 196 (KSGQ…QQVH), and 204 to 214 (VQANNSTSKTA). A compositionally biased stretch (low complexity) spans 361–372 (SSSEAGASNSSV). Residues 373–392 (GAGGNGGGGSSGGGSGGSSG) show a composition bias toward gly residues. The RFX-type winged-helix DNA-binding region spans 423 to 498 (TVQWLLDNYE…YHYYGLRIKA (76 aa)). The tract at residues 899 to 948 (SLNPLDPDKDEEEEEEEESEDELPQDISLAAGSESPALGPEALEPPAKLA) is disordered. Positions 906–922 (DKDEEEEEEEESEDELP) are enriched in acidic residues. Low complexity predominate over residues 932 to 947 (ESPALGPEALEPPAKL). Phosphoserine is present on residues Ser962 and Ser963.

It belongs to the RFX family. In terms of assembly, homodimer; binds DNA as a homodimer. Heterodimer; heterodimerizes with RFX2 and RFX3.

The protein resides in the nucleus. In terms of biological role, regulatory factor essential for MHC class II genes expression. Binds to the X boxes of MHC class II genes. The sequence is that of MHC class II regulatory factor RFX1 (Rfx1) from Mus musculus (Mouse).